The sequence spans 155 residues: Endoribonuclease YbeY (155 aa).

The Zn(2+) site is built by H113, H117, and H123.

This sequence belongs to the endoribonuclease YbeY family. Zn(2+) serves as cofactor.

The protein resides in the cytoplasm. Its function is as follows. Single strand-specific metallo-endoribonuclease involved in late-stage 70S ribosome quality control and in maturation of the 3' terminus of the 16S rRNA. The polypeptide is Endoribonuclease YbeY (Ureaplasma urealyticum serovar 10 (strain ATCC 33699 / Western)).